Reading from the N-terminus, the 307-residue chain is MAKISVIGAGNVGATTVQRLAELELGEIVMTDIVEGLPQGKALDLIQAGAIKGYDTSIIGTNDYAEIVDSDLVIITAGIARKPGMTREDLIKTNSKIIAEVSRNIAKYAPDSIVINVTNPLDIITYIAMKSTGFETKKVFGMSGVLDSGRFASFIAEELKCSKKDVQAMVIGGHGDLMVPLPQYTTVSGVPLTDLLPGDRIARLVERTVNGGAEIVELLKQGSAFYAPSAAIVSMAEAVIKNSKRILPASAYLEGHYGQEGIYFGVPVKLGASGVEEILELKLDESQYETLRKSSETIRNTISQLEI.

NAD(+) is bound by residues 8–13 and Asp32; that span reads GAGNVG. Substrate-binding residues include Arg81 and Arg87. NAD(+) contacts are provided by residues Asn94 and 117–119; that span reads VTN. Positions 119 and 150 each coordinate substrate. The Proton acceptor role is filled by His174.

The protein belongs to the LDH/MDH superfamily.

It carries out the reaction (S)-malate + NAD(+) = oxaloacetate + NADH + H(+). Catalyzes the reversible oxidation of malate to oxaloacetate. In Methanosarcina barkeri (strain Fusaro / DSM 804), this protein is Malate dehydrogenase (mdh).